A 263-amino-acid chain; its full sequence is Hydroxyacylglutathione hydrolase (263 aa).

Zn(2+) contacts are provided by His55, His57, Asp59, His60, His117, Asp134, and His172.

The protein belongs to the metallo-beta-lactamase superfamily. Glyoxalase II family. Monomer. It depends on Zn(2+) as a cofactor.

It catalyses the reaction an S-(2-hydroxyacyl)glutathione + H2O = a 2-hydroxy carboxylate + glutathione + H(+). It participates in secondary metabolite metabolism; methylglyoxal degradation; (R)-lactate from methylglyoxal: step 2/2. In terms of biological role, thiolesterase that catalyzes the hydrolysis of S-D-lactoyl-glutathione to form glutathione and D-lactic acid. The protein is Hydroxyacylglutathione hydrolase of Shewanella baltica (strain OS155 / ATCC BAA-1091).